A 138-amino-acid chain; its full sequence is Large ribosomal subunit protein uL16 (138 aa).

The span at 1 to 13 shows a compositional bias: basic residues; the sequence is MLQPSRRKFRKEQ. Residues 1-22 form a disordered region; it reads MLQPSRRKFRKEQKGRNTGIAT.

The protein belongs to the universal ribosomal protein uL16 family. In terms of assembly, part of the 50S ribosomal subunit.

Its function is as follows. Binds 23S rRNA and is also seen to make contacts with the A and possibly P site tRNAs. The sequence is that of Large ribosomal subunit protein uL16 from Methylibium petroleiphilum (strain ATCC BAA-1232 / LMG 22953 / PM1).